We begin with the raw amino-acid sequence, 352 residues long: N-acetyl-gamma-glutamyl-phosphate reductase (352 aa).

Cys151 is a catalytic residue.

It belongs to the NAGSA dehydrogenase family. Type 1 subfamily.

Its subcellular location is the cytoplasm. The catalysed reaction is N-acetyl-L-glutamate 5-semialdehyde + phosphate + NADP(+) = N-acetyl-L-glutamyl 5-phosphate + NADPH + H(+). It participates in amino-acid biosynthesis; L-arginine biosynthesis; N(2)-acetyl-L-ornithine from L-glutamate: step 3/4. Functionally, catalyzes the NADPH-dependent reduction of N-acetyl-5-glutamyl phosphate to yield N-acetyl-L-glutamate 5-semialdehyde. This chain is N-acetyl-gamma-glutamyl-phosphate reductase, found in Renibacterium salmoninarum (strain ATCC 33209 / DSM 20767 / JCM 11484 / NBRC 15589 / NCIMB 2235).